We begin with the raw amino-acid sequence, 348 residues long: F-box protein At2g20380 (348 aa).

In terms of domain architecture, F-box spans serine 14–arginine 60.

The protein is F-box protein At2g20380 of Arabidopsis thaliana (Mouse-ear cress).